Consider the following 321-residue polypeptide: Aspartate carbamoyltransferase catalytic subunit (321 aa).

2 residues coordinate carbamoyl phosphate: Arg-65 and Thr-66. Position 93 (Lys-93) interacts with L-aspartate. Carbamoyl phosphate is bound by residues Arg-115, His-143, and Gln-146. L-aspartate-binding residues include Arg-176 and Arg-230. 2 residues coordinate carbamoyl phosphate: Gly-271 and Pro-272.

Belongs to the aspartate/ornithine carbamoyltransferase superfamily. ATCase family. Heterododecamer (2C3:3R2) of six catalytic PyrB chains organized as two trimers (C3), and six regulatory PyrI chains organized as three dimers (R2).

The catalysed reaction is carbamoyl phosphate + L-aspartate = N-carbamoyl-L-aspartate + phosphate + H(+). Its pathway is pyrimidine metabolism; UMP biosynthesis via de novo pathway; (S)-dihydroorotate from bicarbonate: step 2/3. Its function is as follows. Catalyzes the condensation of carbamoyl phosphate and aspartate to form carbamoyl aspartate and inorganic phosphate, the committed step in the de novo pyrimidine nucleotide biosynthesis pathway. The protein is Aspartate carbamoyltransferase catalytic subunit of Bartonella bacilliformis (strain ATCC 35685 / KC583 / Herrer 020/F12,63).